A 186-amino-acid chain; its full sequence is uncharacterized protein (186 aa).

It belongs to the geranylgeranyl reductase family. ChlP subfamily.

This is an uncharacterized protein from Methanosarcina barkeri.